The following is a 300-amino-acid chain: Regulatory protein NocR (300 aa).

Residues 1–59 (MIQSRQLEAFRPVMLTGGMTSAANLVRITQPAISRLIRDLEEEIGISLFERTGNRLRPT) form the HTH lysR-type domain. The segment at residues 19 to 38 (MTSAANLVRITQPAISRLIR) is a DNA-binding region (H-T-H motif).

This sequence belongs to the LysR transcriptional regulatory family.

Functionally, positive regulatory protein for the noc operon involved in nopaline catabolism and uptake. This chain is Regulatory protein NocR (nocR), found in Agrobacterium tumefaciens (strain T37).